Here is a 267-residue protein sequence, read N- to C-terminus: Probable ribosomal RNA small subunit methyltransferase A (267 aa).

Positions 12, 37, 58, 83, and 100 each coordinate S-adenosyl-L-methionine.

The protein belongs to the class I-like SAM-binding methyltransferase superfamily. rRNA adenine N(6)-methyltransferase family. RsmA subfamily.

The protein resides in the cytoplasm. Functionally, specifically dimethylates two adjacent adenosines in the loop of a conserved hairpin near the 3'-end of 16S rRNA in the 30S particle. May play a critical role in biogenesis of 30S subunits. The chain is Probable ribosomal RNA small subunit methyltransferase A from Methanococcus vannielii (strain ATCC 35089 / DSM 1224 / JCM 13029 / OCM 148 / SB).